Here is a 259-residue protein sequence, read N- to C-terminus: Activator of lactoyl-CoA dehydratase (259 aa).

Residues Cys-125 and Cys-164 each coordinate [4Fe-4S] cluster.

In terms of assembly, homodimer. It depends on [4Fe-4S] cluster as a cofactor.

Functionally, required for the activation of lactoyl-CoA dehydratase. This protein is extremely sensitive towards oxygen. The polypeptide is Activator of lactoyl-CoA dehydratase (lcdC) (Anaerotignum propionicum (Clostridium propionicum)).